A 294-amino-acid chain; its full sequence is Nucleotide-binding protein lp_0779 (294 aa).

12–19 (GMSGAGKT) provides a ligand contact to ATP. 62–65 (DLRS) is a GTP binding site.

The protein belongs to the RapZ-like family.

Displays ATPase and GTPase activities. The sequence is that of Nucleotide-binding protein lp_0779 from Lactiplantibacillus plantarum (strain ATCC BAA-793 / NCIMB 8826 / WCFS1) (Lactobacillus plantarum).